The primary structure comprises 74 residues: UPF0346 protein BPUM_1890 (74 aa).

Belongs to the UPF0346 family.

This Bacillus pumilus (strain SAFR-032) protein is UPF0346 protein BPUM_1890.